The following is a 370-amino-acid chain: Anhydro-N-acetylmuramic acid kinase (370 aa).

13–20 (GTSMDGVD) is an ATP binding site.

This sequence belongs to the anhydro-N-acetylmuramic acid kinase family.

The enzyme catalyses 1,6-anhydro-N-acetyl-beta-muramate + ATP + H2O = N-acetyl-D-muramate 6-phosphate + ADP + H(+). It participates in amino-sugar metabolism; 1,6-anhydro-N-acetylmuramate degradation. It functions in the pathway cell wall biogenesis; peptidoglycan recycling. In terms of biological role, catalyzes the specific phosphorylation of 1,6-anhydro-N-acetylmuramic acid (anhMurNAc) with the simultaneous cleavage of the 1,6-anhydro ring, generating MurNAc-6-P. Is required for the utilization of anhMurNAc either imported from the medium or derived from its own cell wall murein, and thus plays a role in cell wall recycling. The chain is Anhydro-N-acetylmuramic acid kinase from Vibrio vulnificus (strain CMCP6).